Consider the following 317-residue polypeptide: E3 ubiquitin-protein ligase NRDP1 (317 aa).

Residues Cys18–Arg57 form an RING-type; degenerate zinc finger. An SIAH-type; degenerate zinc finger spans residues Lys78–Leu138.

In terms of assembly, interacts with USP8, ERBB3, PRKN and BIRC6. Interacts with CSF2RB, EPOR, IL3RA, MYD88 and TBK1. Interacts with Clec16a. In terms of processing, autoubiquitinated. Autoubiquitination leads to proteasomal degradation. Deubiquitinated by USP8 to get stabilized which induces apoptosis.

It catalyses the reaction S-ubiquitinyl-[E2 ubiquitin-conjugating enzyme]-L-cysteine + [acceptor protein]-L-lysine = [E2 ubiquitin-conjugating enzyme]-L-cysteine + N(6)-ubiquitinyl-[acceptor protein]-L-lysine.. It participates in protein modification; protein ubiquitination. Its function is as follows. Acts as E3 ubiquitin-protein ligase and regulates the degradation of target proteins. Polyubiquitinates MYD88. Negatively regulates MYD88-dependent production of pro-inflammatory cytokines. Can promote TRIF-dependent production of type I interferon and inhibits infection with vesicular stomatitis virus. Also promotes activation of TBK1 and IRF3. Involved in the ubiquitination of erythropoietin (EPO) and interleukin-3 (IL-3) receptors. Thus, through maintaining basal levels of cytokine receptors, RNF41 is involved in the control of hematopoietic progenitor cell differentiation into myeloerythroid lineages. Contributes to the maintenance of steady-state ERBB3 levels by mediating its growth factor-independent degradation. Involved in the degradation of the inhibitor of apoptosis BIRC6 and thus is an important regulator of cell death by promoting apoptosis. Also acts as a PRKN modifier that accelerates its degradation, resulting in a reduction of PRKN activity, influencing the balance of intracellular redox state. The RNF41-PRKN pathway regulates autophagosome-lysosome fusion during late mitophagy. Mitophagy is a selective form of autophagy necessary for mitochondrial quality control. In Mus musculus (Mouse), this protein is E3 ubiquitin-protein ligase NRDP1 (Rnf41).